We begin with the raw amino-acid sequence, 84 residues long: U4-theraphotoxin-Hhn1a (84 aa).

A signal peptide spans 1-22; that stretch reads MKVTLIAIPTCAAVLVLHTTAA. A propeptide spanning residues 23-47 is cleaved from the precursor; that stretch reads EELEESQLMEVGMPDTELAAVDEER. Intrachain disulfides connect cysteine 51–cysteine 65, cysteine 55–cysteine 76, and cysteine 70–cysteine 81.

It belongs to the neurotoxin 12 (Hwtx-2) family. 02 (Hwtx-2) subfamily. As to expression, expressed by the venom gland.

It is found in the secreted. Its function is as follows. Postsynaptic neurotoxin. The protein is U4-theraphotoxin-Hhn1a of Cyriopagopus hainanus (Chinese bird spider).